We begin with the raw amino-acid sequence, 256 residues long: Small ribosomal subunit protein eS1A (256 aa).

N-acetylalanine; partial is present on A2.

It belongs to the eukaryotic ribosomal protein eS1 family. As to quaternary structure, component of the small ribosomal subunit. Mature ribosomes consist of a small (40S) and a large (60S) subunit. The 40S subunit contains about 33 different proteins and 1 molecule of RNA (18S). The 60S subunit contains about 49 different proteins and 3 molecules of RNA (25S, 5.8S and 5S).

The protein resides in the cytoplasm. In Clavispora lusitaniae (strain ATCC 42720) (Yeast), this protein is Small ribosomal subunit protein eS1A.